A 139-amino-acid chain; its full sequence is Metallothiol transferase FosB (139 aa).

The VOC domain maps to 4–119; the sequence is GINHITYSVS…DGHKLELHTG (116 aa). Positions 7, 66, and 115 each coordinate Mg(2+). Catalysis depends on Glu-115, which acts as the Proton donor/acceptor.

It belongs to the fosfomycin resistance protein family. FosB subfamily. As to quaternary structure, homodimer. It depends on Mg(2+) as a cofactor.

Its subcellular location is the cytoplasm. Its function is as follows. Metallothiol transferase which confers resistance to fosfomycin by catalyzing the addition of a thiol cofactor to fosfomycin. L-cysteine is probably the physiological thiol donor. This is Metallothiol transferase FosB from Staphylococcus epidermidis.